The primary structure comprises 473 residues: Sphingosine kinase 1 (473 aa).

One can recognise a DAGKc domain in the interval 83–233; the sequence is QCRGNLLVFI…VALYSVKTDN (151 aa). ATP contacts are provided by residues 93–95 and 125–129; these read NPN and TTGPN. Residue 151–154 coordinates substrate; sequence SGDG. The Proton donor/acceptor role is filled by D153. Residues E158 and 184–186 contribute to the ATP site; that span reads GSG. D251 serves as a coordination point for substrate. Residues R258, R265, and 448-450 each bind ATP; that span reads DGE.

Requires Mg(2+) as cofactor. Expressed in the majority of cholinergic and GABAergic neurons, body wall muscle, excretory canal cells, intestine, and hypodermis.

It localises to the presynaptic cell membrane. It is found in the cell projection. The protein resides in the axon. Its subcellular location is the perikaryon. The protein localises to the mitochondrion membrane. It carries out the reaction a sphingoid base + ATP = a sphingoid 1-phosphate + ADP + H(+). The catalysed reaction is 15-methylhexadecasphing-4-enine + ATP = 15-methylhexadecasphing-4-enine 1-phosphate + ADP + H(+). It catalyses the reaction 15-methylhexadecasphinganine + ATP = 15-methylhexadecasphinganine 1-phosphate + ADP + H(+). The protein operates within lipid metabolism; sphingolipid metabolism. In terms of biological role, catalyzes the phosphorylation of sphingoid bases to form sphingoid 1-phosphate (SPP), which have both intra- and extracellular functions. C.elegans contain specific sphingoid bases, which are unique or different in structure compared to the sphingoid bases found in other animals. Two examples of these distinctive compounds are: 15-methylhexadecasphinganine and 15-methylhexadecasphing-4-enine. Required for neurotransmitter release from neuromuscular junctions. Acts by recruiting the synaptic vesicle priming protein unc-13 to synapses. The chain is Sphingosine kinase 1 (sphk-1) from Caenorhabditis elegans.